The primary structure comprises 373 residues: tRNA-specific 2-thiouridylase MnmA (373 aa).

ATP is bound by residues 12-19 (GMSGGVDS) and Met38. An interaction with target base in tRNA region spans residues 98–100 (NPD). Residue Cys103 is the Nucleophile of the active site. Residues Cys103 and Cys200 are joined by a disulfide bond. Residue Gly127 coordinates ATP. An interaction with tRNA region spans residues 150–152 (KDQ). Cys200 serves as the catalytic Cysteine persulfide intermediate. Residues 312–313 (RY) are interaction with tRNA.

This sequence belongs to the MnmA/TRMU family.

Its subcellular location is the cytoplasm. The enzyme catalyses S-sulfanyl-L-cysteinyl-[protein] + uridine(34) in tRNA + AH2 + ATP = 2-thiouridine(34) in tRNA + L-cysteinyl-[protein] + A + AMP + diphosphate + H(+). Catalyzes the 2-thiolation of uridine at the wobble position (U34) of tRNA, leading to the formation of s(2)U34. The protein is tRNA-specific 2-thiouridylase MnmA of Streptococcus pyogenes serotype M12 (strain MGAS2096).